We begin with the raw amino-acid sequence, 345 residues long: uncharacterized protein (345 aa).

It is found in the plastid. It localises to the chloroplast. This is an uncharacterized protein from Chlamydomonas moewusii (Chlamydomonas eugametos).